The primary structure comprises 256 residues: 5'-nucleotidase SurE (256 aa).

Asp-8, Asp-9, Ser-42, and Asn-94 together coordinate a divalent metal cation.

The protein belongs to the SurE nucleotidase family. The cofactor is a divalent metal cation.

It is found in the cytoplasm. The catalysed reaction is a ribonucleoside 5'-phosphate + H2O = a ribonucleoside + phosphate. Functionally, nucleotidase that shows phosphatase activity on nucleoside 5'-monophosphates. This chain is 5'-nucleotidase SurE, found in Ehrlichia chaffeensis (strain ATCC CRL-10679 / Arkansas).